A 191-amino-acid chain; its full sequence is 3-isopropylmalate dehydratase small subunit (191 aa).

The protein belongs to the LeuD family. LeuD type 1 subfamily. In terms of assembly, heterodimer of LeuC and LeuD.

It catalyses the reaction (2R,3S)-3-isopropylmalate = (2S)-2-isopropylmalate. Its pathway is amino-acid biosynthesis; L-leucine biosynthesis; L-leucine from 3-methyl-2-oxobutanoate: step 2/4. Functionally, catalyzes the isomerization between 2-isopropylmalate and 3-isopropylmalate, via the formation of 2-isopropylmaleate. The sequence is that of 3-isopropylmalate dehydratase small subunit from Solibacter usitatus (strain Ellin6076).